The sequence spans 300 residues: N-acetylmuramic acid 6-phosphate etherase (300 aa).

Residues 57-220 enclose the SIS domain; sequence VAAALRAGGR…STGAMIRIGK (164 aa). The Proton donor role is filled by E85. E116 is an active-site residue.

Belongs to the GCKR-like family. MurNAc-6-P etherase subfamily. Homodimer.

It carries out the reaction N-acetyl-D-muramate 6-phosphate + H2O = N-acetyl-D-glucosamine 6-phosphate + (R)-lactate. It functions in the pathway amino-sugar metabolism; 1,6-anhydro-N-acetylmuramate degradation. It participates in amino-sugar metabolism; N-acetylmuramate degradation. Its pathway is cell wall biogenesis; peptidoglycan recycling. Its function is as follows. Specifically catalyzes the cleavage of the D-lactyl ether substituent of MurNAc 6-phosphate, producing GlcNAc 6-phosphate and D-lactate. Together with AnmK, is also required for the utilization of anhydro-N-acetylmuramic acid (anhMurNAc) either imported from the medium or derived from its own cell wall murein, and thus plays a role in cell wall recycling. In Klebsiella aerogenes (Enterobacter aerogenes), this protein is N-acetylmuramic acid 6-phosphate etherase.